Consider the following 69-residue polypeptide: UPF0434 protein Rmet_0534 (69 aa).

It belongs to the UPF0434 family.

The chain is UPF0434 protein Rmet_0534 from Cupriavidus metallidurans (strain ATCC 43123 / DSM 2839 / NBRC 102507 / CH34) (Ralstonia metallidurans).